A 1984-amino-acid polypeptide reads, in one-letter code: Sodium channel protein type 9 subunit alpha (1984 aa).

Residues 1–125 lie on the Cytoplasmic side of the membrane; that stretch reads MAMLPPPGPQ…RRISIKILVH (125 aa). The span at 26–39 shows a compositional bias: basic and acidic residues; that stretch reads RISEEKAKEHKDEK. The interval 26 to 55 is disordered; the sequence is RISEEKAKEHKDEKKDDEEEGPKPSSDLEA. Residues 112 to 410 form an I repeat; sequence FSPLRRISIK…VAMAYEEQNQ (299 aa). A helical transmembrane segment spans residues 126-145; that stretch reads SLFSMLIMCTILTNCIFMTL. At 146–150 the chain is on the extracellular side; that stretch reads SNPPE. Residues 151 to 172 form a helical membrane-spanning segment; the sequence is WTKNVEYTFTGIYTFESLIKIL. The Cytoplasmic portion of the chain corresponds to 173 to 185; it reads ARGFCVGEFTFLR. A helical membrane pass occupies residues 186-204; that stretch reads DPWNWLDFVVIVFAYLTEF. The Extracellular segment spans residues 205–210; it reads VNLGNV. N-linked (GlcNAc...) asparagine glycosylation occurs at Asn209. The helical transmembrane segment at 211–227 threads the bilayer; sequence SALRTFRVLRALKTISV. Over 228–241 the chain is Cytoplasmic; the sequence is IPGLKTIVGALIQS. The chain crosses the membrane as a helical span at residues 242–267; the sequence is VKKLSDVMILTVFCLSVFALIGLQLF. Topologically, residues 268 to 346 are extracellular; sequence MGNLKHKCFR…PDYGYTSFDT (79 aa). Cys275 and Cys324 form a disulfide bridge. Asn283 carries N-linked (GlcNAc...) asparagine glycosylation. The segment at residues 347-363 is an intramembrane region (pore-forming); the sequence is FSWAFLALFRLMTQDYW. Topologically, residues 364-376 are extracellular; the sequence is ENLYQQTLRAAGK. Residues 377–402 form a helical membrane-spanning segment; it reads TYMIFFVVVIFLGSFYLINLILAVVA. Residues 403–744 lie on the Cytoplasmic side of the membrane; sequence MAYEEQNQAN…LIYFIVMDPF (342 aa). Over residues 461–471 the composition is skewed to low complexity; sequence SSSETSRLSSK. Disordered regions lie at residues 461–542 and 576–609; these read SSSE…RGSL and IFGDNESRRGSLFVPHRPRERRSSNISQASRSPP. A compositionally biased stretch (basic residues) spans 474-486; that stretch reads KERRNRRKKKKQK. Basic and acidic residues predominate over residues 489–509; it reads SGEEKGDDEKLSKSGSEESIR. The II repeat unit spans residues 725–988; the sequence is CSPYWIKFKK…EEDTDANNLQ (264 aa). The chain crosses the membrane as a helical span at residues 745–761; the sequence is VDLAITICIVLNTLFMA. Topologically, residues 762–770 are extracellular; the sequence is MEHHPMTEE. A helical transmembrane segment spans residues 771-795; it reads FKNVLAVGNLIFTGIFAAEMVLKLI. Topologically, residues 796–804 are cytoplasmic; the sequence is AMDPYEYFQ. Residues 805–821 form a helical membrane-spanning segment; sequence VGWNIFDSLIVTLSLIE. Residues 822–830 lie on the Extracellular side of the membrane; it reads LFLADVEGL. The chain crosses the membrane as a helical span at residues 831–847; sequence SVLRSFRLLRVFKLAKS. The Cytoplasmic portion of the chain corresponds to 848–864; that stretch reads WPTLNMLIKIIGNSVGA. The chain crosses the membrane as a helical span at residues 865–887; the sequence is LGNLTLVLAIIVFIFAVVGMQLF. Topologically, residues 888-914 are extracellular; that stretch reads GKSYKECVCKINVDCKLPRWHMNDFFH. Cys896 and Cys902 are disulfide-bonded. An intramembrane region (pore-forming) is located at residues 915 to 927; that stretch reads SFLIVFRVLCGEW. At 928–939 the chain is on the extracellular side; sequence IETMWDCMEVAG. Cysteines 934 and 943 form a disulfide. Residues 940-966 form a helical membrane-spanning segment; that stretch reads QTMCLIVYMMVMVIGNLVVLNLFLALL. The Cytoplasmic portion of the chain corresponds to 967 to 1185; that stretch reads LSSFSSDNLT…WWTIRKTCYR (219 aa). 2 disordered regions span residues 1015-1040 and 1103-1145; these read KKPKGSKDTKRTADPNNKKENYISNR and EELS…EPVN. The segment covering 1019-1035 has biased composition (basic and acidic residues); the sequence is GSKDTKRTADPNNKKEN. The span at 1135-1145 shows a compositional bias: acidic residues; it reads GEEEAEAEPVN. Residues 1178–1486 form an III repeat; it reads TIRKTCYRIV…KKYYNAMKKL (309 aa). Residues 1186 to 1210 form a helical membrane-spanning segment; that stretch reads IVEHSWFESFIVLMILLSSGALAFE. Over 1211–1222 the chain is Extracellular; the sequence is DIYIEKKKTIKI. Residues 1223–1248 traverse the membrane as a helical segment; sequence ILEYADKIFTYIFILEMLLKWVAYGY. Residues 1249 to 1250 lie on the Cytoplasmic side of the membrane; it reads KT. The helical transmembrane segment at 1251-1276 threads the bilayer; it reads YFTNAWCWLDFLIVDVSLVTLVANTL. Residues 1277–1285 are Extracellular-facing; it reads GYSDLGPIK. A helical transmembrane segment spans residues 1286–1302; sequence SLRTLRALRPLRALSRF. At 1303 to 1315 the chain is on the cytoplasmic side; sequence EGMRVVVNALIGA. Residues 1316 to 1340 form a helical membrane-spanning segment; the sequence is IPSIMNVLLVCLIFWLIFSIMGVNL. The Extracellular segment spans residues 1341–1392; that stretch reads FAGKFYECVNTTDGSRFPTSQVANRSECFALMNVSGNVRWKNLKVNFDNVGL. The cysteines at positions 1348 and 1368 are disulfide-linked. N-linked (GlcNAc...) asparagine glycans are attached at residues Asn1350, Asn1364, and Asn1373. The pore-forming intramembrane region spans 1393–1403; sequence GYLSLLQVATF. The Extracellular segment spans residues 1404-1429; the sequence is KGWMDIMYAAVDSVNVNEQPKYEYSL. Residues 1430-1455 form a helical membrane-spanning segment; that stretch reads YMYIYFVIFIIFGSFFTLNLFIGVII. Over 1456-1512 the chain is Cytoplasmic; the sequence is DNFNQQKKKLGGQDIFMTEEQKKYYNAMKKLGSKKPQKPIPRPGNKFQGCIFDLVTN. Ser1488 is subject to Phosphoserine; by PKC. An IV repeat occupies 1495 to 1793; it reads IPRPGNKFQG…WEKFDPDATQ (299 aa). A helical transmembrane segment spans residues 1513–1532; that stretch reads QAFDITIMVLICLNMVTMMV. The Extracellular portion of the chain corresponds to 1533–1543; the sequence is EKEGQTEYMDY. A helical membrane pass occupies residues 1544 to 1565; sequence VLHWINMVFIILFTGECVLKLI. Over 1566 to 1574 the chain is Cytoplasmic; that stretch reads SLRHYYFTV. Residues 1575-1596 form a helical membrane-spanning segment; it reads GWNIFDFVVVILSIVGMFLAEM. Residues 1597–1605 lie on the Extracellular side of the membrane; sequence IEKYFVSPT. The helical transmembrane segment at 1606–1625 threads the bilayer; it reads LFRVIRLARIGRILRLIKGA. The Cytoplasmic portion of the chain corresponds to 1626–1638; sequence KGIRTLLFALMMS. A helical membrane pass occupies residues 1639 to 1661; it reads LPALFNIGLLLFLVMFIYAIFGM. Residues 1662–1684 are Extracellular-facing; the sequence is SNFAYVKKEAGINDMFNFETFGN. An intramembrane region (pore-forming) is located at residues 1685 to 1697; sequence SMICLFQITTSAG. Residues 1698 to 1731 are Extracellular-facing; the sequence is WDGLLAPILNSAPPDCDPKKVHPGSSVEGDCGNP. Cys1713 and Cys1728 are joined by a disulfide. Residues 1732 to 1757 form a helical membrane-spanning segment; it reads SVGIFYFVSYIIISFLVVVNMYIAVI. The Cytoplasmic segment spans residues 1758–1984; that stretch reads LENFSVATEE…EDKEKDESRK (227 aa). The region spanning 1887–1916 is the IQ domain; it reads EEVSATIIQRAYRRYRLRQHVKNISSIYIK. Residues 1916–1930 show a composition bias toward basic and acidic residues; sequence KDGDRDDDLPNKEDT. The tract at residues 1916 to 1984 is disordered; that stretch reads KDGDRDDDLP…EDKEKDESRK (69 aa). Positions 1946-1958 are enriched in polar residues; the sequence is VTASTISPPSYDS. Over residues 1960 to 1984 the composition is skewed to basic and acidic residues; the sequence is TKPDQEKYETDKTEKEDKEKDESRK.

The protein belongs to the sodium channel (TC 1.A.1.10) family. Nav1.7/SCN9A subfamily. The Nav1.7 voltage-gated sodium channel consists of an ion-conducting alpha subunit SCN9A which is functional on its own regulated by one or more beta-1 (SCN1B), beta-2 (SCN2B), beta-3 (SCN3B) and beta-4 (SCN4B) subunits. SCN1B and SCN3B are non-covalently associated with SCN9A. SCN2B and SCN4B are disulfide-linked to SCN9A. SCN1B regulates channel inactivation. Interacts with NEDD4 and NEDD4L; regulates Nav1.7 activity most probably through ubiquitination and subsequent endocytosis. Interacts with TMEM233; modulates the gating properties of NaV1.7. Phosphorylation at Ser-1488 by PKC in a highly conserved cytoplasmic loop increases peak sodium currents. In terms of processing, ubiquitinated by NEDD4L; which may promote its endocytosis. Does not seem to be ubiquitinated by NEDD4. Post-translationally, ubiquitinated by NEDD4L; which may promote its endocytosis. Expressed at high level in the dorsal root ganglion and at much lower levels in the brain, sciatic nerve, nodose ganglia, heart, thyroid and adrenal glands and Schwann cells, but not in the cardiac and skeletal muscles, brain and liver.

It localises to the cell membrane. The protein resides in the cell projection. The protein localises to the neuron projection. It is found in the axon. It catalyses the reaction Na(+)(in) = Na(+)(out). With respect to regulation, inhibited by the conotoxin GVIIJ. Functionally, pore-forming subunit of Nav1.7, a voltage-gated sodium (Nav) channel that directly mediates the depolarizing phase of action potentials in excitable membranes. Navs, also called VGSCs (voltage-gated sodium channels) or VDSCs (voltage-dependent sodium channels), operate by switching between closed and open conformations depending on the voltage difference across the membrane. In the open conformation they allow Na(+) ions to selectively pass through the pore, along their electrochemical gradient. The influx of Na(+) ions provokes membrane depolarization, initiating the propagation of electrical signals throughout cells and tissues. Nav1.7 plays a crucial role in controlling the excitability and action potential propagation from nociceptor neurons, thereby contributing to the sensory perception of pain. The sequence is that of Sodium channel protein type 9 subunit alpha from Rattus norvegicus (Rat).